The following is a 445-amino-acid chain: Inward rectifier potassium channel 4 (445 aa).

At 1–55 (MHGHNRNGQAHVPRRKRRNRFVKKNGQCNVYFANLSNKSQRYMADIFTTCVDTRW) the chain is on the cytoplasmic side. A helical membrane pass occupies residues 56–80 (RYMLMIFSAAFLVSWLFFGLLFWWI). At 81-119 (AFFHGDLEASPSVPAVGGPGGNGGESPNAPKPCIMHVNG) the chain is on the extracellular side. Residues 120–131 (FLGAFLFSVETQ) constitute an intramembrane region (helical; Pore-forming). The pore-forming intramembrane region spans 132-138 (TTIGYGF). The short motif at 133-138 (TIGYGF) is the Selectivity filter element. The Extracellular portion of the chain corresponds to 139–147 (RCVTEECPL). Residues 148–169 (AVIAVVVQSIVGCVIDSFMIGT) traverse the membrane as a helical segment. Residues 170-445 (IMAKMARPKK…NISYRRESRI (276 aa)) are Cytoplasmic-facing. The PDZ-binding motif lies at 443-445 (SRI).

It belongs to the inward rectifier-type potassium channel (TC 1.A.2.1) family. KCNJ4 subfamily. Homomultimeric and heteromultimeric association with KCNJ2 and KCNJ12. Interacts with DLG2 and DLG4. Associates, via its PDZ-recognition domain, with a complex containing LIN7A, LIN7B, LIN7C, DLG1, CASK and APBA1. Interacts with TAX1BP3. TAX1BP3 competes with LIN7 family members for KCNJ4 binding. As to expression, highly expressed in the forebrain, moderately in skeletal muscle. Im olfactory bulb, specifically expressed at the postsynaptic membrane of dendritic spines of granule cells.

It localises to the cell membrane. Its subcellular location is the postsynaptic cell membrane. The protein localises to the cytoplasmic vesicle membrane. The enzyme catalyses K(+)(in) = K(+)(out). Its function is as follows. Inward rectifier potassium channels are characterized by a greater tendency to allow potassium to flow into the cell rather than out of it. Their voltage dependence is regulated by the concentration of extracellular potassium; as external potassium is raised, the voltage range of the channel opening shifts to more positive voltages. The inward rectification is mainly due to the blockage of outward current by internal magnesium. Can be blocked by extracellular barium and cesium. The sequence is that of Inward rectifier potassium channel 4 (Kcnj4) from Mus musculus (Mouse).